The sequence spans 126 residues: Larval cuticle protein 2 (126 aa).

A signal peptide spans 1–16 (MFKFVMVFAVLGLAAA). The Chitin-binding type R&amp;R domain maps to 39 to 100 (ADGFDTDLVV…PVGAVLPTPP (62 aa)).

Its function is as follows. Component of the larval cuticle. The chain is Larval cuticle protein 2 (Lcp2) from Drosophila miranda (Fruit fly).